The primary structure comprises 328 residues: Anthranilate phosphoribosyltransferase (328 aa).

Residues Gly-79, 82–83 (GD), Thr-87, 89–92 (NIST), 107–115 (KHGNYAVSS), and Ser-119 contribute to the 5-phospho-alpha-D-ribose 1-diphosphate site. Position 79 (Gly-79) interacts with anthranilate. Residue Ser-91 coordinates Mg(2+). Asn-110 provides a ligand contact to anthranilate. Position 165 (Arg-165) interacts with anthranilate. Residues Asp-223 and Glu-224 each contribute to the Mg(2+) site.

It belongs to the anthranilate phosphoribosyltransferase family. In terms of assembly, homodimer. Mg(2+) serves as cofactor.

It catalyses the reaction N-(5-phospho-beta-D-ribosyl)anthranilate + diphosphate = 5-phospho-alpha-D-ribose 1-diphosphate + anthranilate. The protein operates within amino-acid biosynthesis; L-tryptophan biosynthesis; L-tryptophan from chorismate: step 2/5. In terms of biological role, catalyzes the transfer of the phosphoribosyl group of 5-phosphorylribose-1-pyrophosphate (PRPP) to anthranilate to yield N-(5'-phosphoribosyl)-anthranilate (PRA). This Cytophaga hutchinsonii (strain ATCC 33406 / DSM 1761 / CIP 103989 / NBRC 15051 / NCIMB 9469 / D465) protein is Anthranilate phosphoribosyltransferase.